The sequence spans 164 residues: Ribosome maturation factor RimM (164 aa).

The PRC barrel domain maps to 90–161; the sequence is KGSYFIADLI…TVTIKPLEIW (72 aa).

This sequence belongs to the RimM family. In terms of assembly, binds ribosomal protein uS19.

The protein resides in the cytoplasm. An accessory protein needed during the final step in the assembly of 30S ribosomal subunit, possibly for assembly of the head region. Essential for efficient processing of 16S rRNA. May be needed both before and after RbfA during the maturation of 16S rRNA. It has affinity for free ribosomal 30S subunits but not for 70S ribosomes. This chain is Ribosome maturation factor RimM, found in Clostridium botulinum (strain Langeland / NCTC 10281 / Type F).